We begin with the raw amino-acid sequence, 165 residues long: MTVVGLIWAQSTTGVIGRDGGMPWRVPEDLTRFKQLTMGHPVVMGRRTWDSLPVGVRPLPGRRNIVLSRQIDFMAEGAEVFGSLEETISNLETEPEMWVIGGEQIYRLALPLATRCGVTEVDTYLLHEDDDVLAPVLDDTWVGVTGEWLVSCSGLRYRLHSYHRS.

In terms of domain architecture, DHFR spans 3–165; it reads VVGLIWAQST…RYRLHSYHRS (163 aa). 7–9 contributes to the substrate binding site; sequence IWA. NADP(+) contacts are provided by residues 8 to 9 and 16 to 21; these read WA and IGRDGG. Aspartate 29 serves as a coordination point for substrate. An NADP(+)-binding site is contributed by 45–48; it reads GRRT. Arginine 62 is a binding site for substrate. Residues 67-70 and 100-105 contribute to the NADP(+) site; these read LSRQ and IGGEQI. Threonine 119 lines the substrate pocket.

The protein belongs to the dihydrofolate reductase family.

It carries out the reaction (6S)-5,6,7,8-tetrahydrofolate + NADP(+) = 7,8-dihydrofolate + NADPH + H(+). Its pathway is cofactor biosynthesis; tetrahydrofolate biosynthesis; 5,6,7,8-tetrahydrofolate from 7,8-dihydrofolate: step 1/1. In terms of biological role, key enzyme in folate metabolism. Catalyzes an essential reaction for de novo glycine and purine synthesis, and for DNA precursor synthesis. This Mycobacterium leprae (strain TN) protein is Dihydrofolate reductase (folA).